Consider the following 416-residue polypeptide: Calreticulin (416 aa).

Residue asparagine 54 is glycosylated (N-linked (GlcNAc...) asparagine). Cysteine 108 and cysteine 140 are disulfide-bonded. Residues tyrosine 112, lysine 114, tyrosine 131, and aspartate 138 each contribute to the an alpha-D-glucoside site. Repeat copies occupy residues 194-205 (KQSGSVYTDWDI), 213-224 (DPEAKKPEDWED), 230-241 (DPEDKKPEGYDD), 248-259 (DPEAKKPEDWDD), 263-273 (GEWTAPTIPNP), 277-287 (GEWKPKKIKNP), and 291-301 (GKWKAPMIDNP). The 4 X approximate repeats stretch occupies residues 194 to 259 (KQSGSVYTDW…EAKKPEDWDD (66 aa)). A disordered region spans residues 209–281 (KQIKDPEAKK…NPDYKGEWKP (73 aa)). Positions 210-255 (QIKDPEAKKPEDWEDKEYIPDPEDKKPEGYDDIPKEITDPEAKKPE) are enriched in basic and acidic residues. The interval 263–301 (GEWTAPTIPNPDYKGEWKPKKIKNPNFKGKWKAPMIDNP) is 3 X approximate repeats. Glutamate 321 is an an alpha-D-glucoside binding site. Residues 349 to 378 (ETWGKNKDAEKAAFDEAEKKKEEEEAKDDP) are compositionally biased toward basic and acidic residues. A disordered region spans residues 349–416 (ETWGKNKDAE…EDDEDVHDEL (68 aa)). Residues 379–416 (TESDDEKPDEEGESDGEGDDESKDIDNEEDDEDVHDEL) show a composition bias toward acidic residues. A Prevents secretion from ER motif is present at residues 413-416 (HDEL).

This sequence belongs to the calreticulin family.

The protein resides in the endoplasmic reticulum lumen. In terms of biological role, molecular calcium-binding chaperone promoting folding, oligomeric assembly and quality control in the ER via the calreticulin/calnexin cycle. This lectin may interact transiently with almost all of the monoglucosylated glycoproteins that are synthesized in the ER. The sequence is that of Calreticulin from Berberis stolonifera (Barberry).